A 76-amino-acid chain; its full sequence is Small ribosomal subunit protein bS18 (76 aa).

The protein belongs to the bacterial ribosomal protein bS18 family. Part of the 30S ribosomal subunit. Forms a tight heterodimer with protein bS6.

Functionally, binds as a heterodimer with protein bS6 to the central domain of the 16S rRNA, where it helps stabilize the platform of the 30S subunit. This is Small ribosomal subunit protein bS18 from Pelotomaculum thermopropionicum (strain DSM 13744 / JCM 10971 / SI).